The sequence spans 207 residues: MDMHMIVKVVAILAVLFLVYKLWESMNKPNASPLKIQNPYEKYMNSAEGGEYDAEDDDIYYPETDAEDDDIYTGETDDMYDGEDDDIYVQEGDDIEDAEDEPYDDSADMEQDVPKVQQPMMPLLTPSSQLLPKPSPEAADFAQFAPKNLQAQNFLTATQWIGVNTQGSSLKNANYDLRADPIIPKADVGPWMMSSVDPNIYQKPLFG.

The tract at residues 7–23 is hydrophobic; the sequence is VKVVAILAVLFLVYKLW. Residues 63 to 82 are disordered; it reads ETDAEDDDIYTGETDDMYDG.

In terms of assembly, interacts with the major capsid protein.

It is found in the virion. One of the minor capsid proteins that constitute a network internal to the major capsid proteins and outside the lipid membrane. The minor capsid proteins glue and stabilize the capsomers. the p11 zip protein binds together the neighboring symmetrons. The protein is Minor capsid protein P11 of Paramecium bursaria Chlorella virus 1 (PBCV-1).